The following is a 260-amino-acid chain: MADS-box transcription factor 29 (260 aa).

The MADS-box domain occupies 1–61 (MGRGKIEIKR…GKMFEYCSPT (61 aa)). Residues 85 to 175 (DQQIFVEMTR…CRMINENHHQ (91 aa)) form the K-box domain.

In terms of tissue distribution, expressed in developing seeds.

The protein localises to the nucleus. In terms of biological role, probable transcription factor. The sequence is that of MADS-box transcription factor 29 (MADS29) from Oryza sativa subsp. japonica (Rice).